A 295-amino-acid polypeptide reads, in one-letter code: Bifunctional protein FolD (295 aa).

NADP(+) is bound by residues 175-177 (GVS) and Ile243.

It belongs to the tetrahydrofolate dehydrogenase/cyclohydrolase family. Homodimer.

The enzyme catalyses (6R)-5,10-methylene-5,6,7,8-tetrahydrofolate + NADP(+) = (6R)-5,10-methenyltetrahydrofolate + NADPH. It carries out the reaction (6R)-5,10-methenyltetrahydrofolate + H2O = (6R)-10-formyltetrahydrofolate + H(+). It participates in one-carbon metabolism; tetrahydrofolate interconversion. Functionally, catalyzes the oxidation of 5,10-methylenetetrahydrofolate to 5,10-methenyltetrahydrofolate and then the hydrolysis of 5,10-methenyltetrahydrofolate to 10-formyltetrahydrofolate. This Xylella fastidiosa (strain 9a5c) protein is Bifunctional protein FolD.